Here is a 571-residue protein sequence, read N- to C-terminus: Urease subunit alpha (571 aa).

In terms of domain architecture, Urease spans 129–571 (GGIDTHIHFI…LPMAQRYFLF (443 aa)). The Ni(2+) site is built by H134, H136, and K217. K217 carries the N6-carboxylysine modification. H219 is a substrate binding site. Residues H246 and H272 each coordinate Ni(2+). Residue H320 is the Proton donor of the active site. D360 lines the Ni(2+) pocket.

Belongs to the metallo-dependent hydrolases superfamily. Urease alpha subunit family. Heterotrimer of UreA (gamma), UreB (beta) and UreC (alpha) subunits. Three heterotrimers associate to form the active enzyme. Requires Ni cation as cofactor. Carboxylation allows a single lysine to coordinate two nickel ions.

The protein resides in the cytoplasm. The enzyme catalyses urea + 2 H2O + H(+) = hydrogencarbonate + 2 NH4(+). It functions in the pathway nitrogen metabolism; urea degradation; CO(2) and NH(3) from urea (urease route): step 1/1. The protein is Urease subunit alpha of Cupriavidus pinatubonensis (strain JMP 134 / LMG 1197) (Cupriavidus necator (strain JMP 134)).